A 404-amino-acid chain; its full sequence is Probable homogentisate phytyltransferase 1, chloroplastic (404 aa).

The transit peptide at 1 to 77 directs the protein to the chloroplast; sequence MDSLRLRPSL…SHHRIPHRPT (77 aa). The segment at 68 to 96 is disordered; it reads SHHRIPHRPTSSSADASGQPLQSSAEAHD. Residues 76-92 are compositionally biased toward polar residues; that stretch reads PTSSSADASGQPLQSSA. The next 9 membrane-spanning stretches (helical) occupy residues 119–139, 144–164, 184–204, 216–238, 245–265, 282–302, 325–345, 348–368, and 382–402; these read TVIGTALSIVSVSLLAVENLS, LFLTGLLEAVVAALFMNIYIV, LASGEYSPATGVALVSAFAAM, PLFLALFISFILGTAYSINLPFL, VVAALCILAVRAVIVQLAFFL, LIFATAFMTFFSVVIALFKDI, VFWICVGLLEMAYCVAILMGA, ACLWSKYATVVGHAILAAILW, and ITSFYMFIWKLFYAEYLLIPL.

Belongs to the UbiA prenyltransferase family.

It is found in the plastid. The protein resides in the chloroplast thylakoid membrane. The enzyme catalyses phytyl diphosphate + homogentisate + H(+) = 2-methyl-6-phytyl-1,4-benzene-1,4-diol + CO2 + diphosphate. Its pathway is cofactor biosynthesis; tocopherol biosynthesis. Involved in the synthesis of tocopherol (vitamin E). Catalyzes the condensation of homogentisate and phytyl diphosphate to form dimethylphytylhydroquinone. This chain is Probable homogentisate phytyltransferase 1, chloroplastic (HPT1), found in Oryza sativa subsp. japonica (Rice).